A 386-amino-acid chain; its full sequence is Lycopene beta-cyclase (386 aa).

4–34 contacts NAD(+); sequence DVLLAGAGLANGLIALALRAARPDLRVLLLD.

It belongs to the lycopene cyclase family. The cofactor is FAD.

The catalysed reaction is a carotenoid psi-end group = a carotenoid beta-end derivative. It catalyses the reaction all-trans-lycopene = gamma-carotene. It carries out the reaction gamma-carotene = all-trans-beta-carotene. It functions in the pathway carotenoid biosynthesis; astaxanthin biosynthesis. Catalyzes the double cyclization reaction which converts lycopene to beta-carotene. In Paracoccus sp. (strain N81106 / MBIC 01143) (Agrobacterium aurantiacum), this protein is Lycopene beta-cyclase.